A 764-amino-acid polypeptide reads, in one-letter code: Probable cyclic nucleotide-gated ion channel 20, chloroplastic (764 aa).

The transit peptide at 1-25 (MASHNENDDIPMLPISDPSSRTRAR) directs the protein to the chloroplast. The interval 1–40 (MASHNENDDIPMLPISDPSSRTRARAFTSRSRSVSLSNPT) is disordered. Low complexity predominate over residues 19–33 (SSRTRARAFTSRSRS). Residues 26–204 (AFTSRSRSVS…PHAKEVQTWT (179 aa)) lie on the Stromal side of the membrane. Residues 205-225 (KFFALSCLLAIFIDPLFFFLI) form a helical membrane-spanning segment. Over 226-242 (KVQEQNKCIMIDWPMTK) the chain is Lumenal. Residues 243–263 (AFVAVRSVTDVIFTMNILLQF) traverse the membrane as a helical segment. The Stromal segment spans residues 264–295 (RLAYVARESTVVGAGQLVSHPKKIALHYLKGK). A helical transmembrane segment spans residues 296 to 316 (FFLDLFIVMPLPQILILWIIP). The Lumenal portion of the chain corresponds to 317-329 (AHLGASGANYAKN). The chain crosses the membrane as a helical span at residues 330 to 350 (LLRAAVLFQYIPKLYRLLPFL). Residues 351–366 (AGQTPTGFIFESAWAN) lie on the Stromal side of the membrane. The helical transmembrane segment at 367-387 (FVINLLTFMLAGHVVGSCWYL) threads the bilayer. The Lumenal segment spans residues 388 to 488 (FGLQRVNQCL…GNQVPSYFLG (101 aa)). Residues 489-509 (EVFFTMGIIGLGLLLFALLIG) traverse the membrane as a helical segment. The Stromal portion of the chain corresponds to 510–764 (NMQNFLQALG…LCTPQSSYSL (255 aa)). Residues 593-710 (IFSL…EDVT) and glutamate 658 contribute to the a nucleoside 3',5'-cyclic phosphate site. The segment at 713 to 729 (FSRFLRSHRVQGAIRYD) is calmodulin-binding. Residues 734–763 (RLRAARQIQVAWRYRRRRLHRLCTPQSSYS) enclose the IQ domain.

Belongs to the cyclic nucleotide-gated cation channel (TC 1.A.1.5) family. In terms of assembly, homotetramer or heterotetramer.

The protein localises to the plastid. It is found in the chloroplast thylakoid membrane. Probable cyclic nucleotide-gated ion channel. This is Probable cyclic nucleotide-gated ion channel 20, chloroplastic (CNGC20) from Arabidopsis thaliana (Mouse-ear cress).